Consider the following 508-residue polypeptide: Photosystem II CP47 reaction center protein (508 aa).

A run of 6 helical transmembrane segments spans residues 21 to 36, 101 to 115, 140 to 156, 203 to 218, 237 to 252, and 457 to 472; these read AVHL…WAGS, ITLS…IWHW, GIHL…FGAF, IAAG…FHLS, VLSS…AFVV, and TFAL…HGAR.

The protein belongs to the PsbB/PsbC family. PsbB subfamily. In terms of assembly, PSII is composed of 1 copy each of membrane proteins PsbA, PsbB, PsbC, PsbD, PsbE, PsbF, PsbH, PsbI, PsbJ, PsbK, PsbL, PsbM, PsbT, PsbX, PsbY, PsbZ, Psb30/Ycf12, at least 3 peripheral proteins of the oxygen-evolving complex and a large number of cofactors. It forms dimeric complexes. Binds multiple chlorophylls. PSII binds additional chlorophylls, carotenoids and specific lipids. serves as cofactor.

The protein resides in the plastid. The protein localises to the chloroplast thylakoid membrane. Functionally, one of the components of the core complex of photosystem II (PSII). It binds chlorophyll and helps catalyze the primary light-induced photochemical processes of PSII. PSII is a light-driven water:plastoquinone oxidoreductase, using light energy to abstract electrons from H(2)O, generating O(2) and a proton gradient subsequently used for ATP formation. This Psilotum nudum (Whisk fern) protein is Photosystem II CP47 reaction center protein.